An 833-amino-acid chain; its full sequence is Transmembrane protease serine 7 (833 aa).

Topologically, residues 1 to 62 (MDKEKSDPSC…RAPFWNVQNK (62 aa)) are cytoplasmic. Residues 30 to 49 (KLPGRRLPRKPIGKARPRKQ) are disordered. The span at 32–49 (PGRRLPRKPIGKARPRKQ) shows a compositional bias: basic residues. A helical; Signal-anchor for type II membrane protein membrane pass occupies residues 63–83 (IILFTVFLFILAVTAWTLLWL). The Extracellular segment spans residues 84–829 (YISKTDSKDA…NFVPWIHKYV (746 aa)). In terms of domain architecture, SEA spans 92-220 (DAFYFVGMFR…DSVVLNAGLR (129 aa)). N196 carries an N-linked (GlcNAc...) asparagine glycan. Intrachain disulfides connect C233-C259, C285-C312, and C355-C386. CUB domains lie at 233-350 (CSQY…FEVI) and 355-471 (CENT…YNIS). Residues N405 and N469 are each glycosylated (N-linked (GlcNAc...) asparagine). 2 LDL-receptor class A domains span residues 473–509 (PCPA…LFCV) and 548–585 (PCTN…EGCG). Disulfide bonds link C474–C486, C481–C499, C493–C508, C549–C561, C556–C575, C569–C584, and C621–C637. The Peptidase S1 domain occupies 596 to 830 (VVGGSDSQEG…FVPWIHKYVP (235 aa)). Active-site charge relay system residues include H636 and D684. Intrachain disulfides connect C720–C786, C752–C765, and C776–C806. Residue S780 is the Charge relay system of the active site.

Belongs to the peptidase S1 family. In terms of assembly, forms a heterodimer with SERPINA5. In terms of processing, N-glycosylated.

The protein localises to the cell membrane. Its function is as follows. Serine protease which preferentially hydrolyzes peptides with Arg at the P1 position. In Rattus norvegicus (Rat), this protein is Transmembrane protease serine 7.